We begin with the raw amino-acid sequence, 450 residues long: Caspase Dronc (450 aa).

A propeptide spanning residues 1 to 134 (MQPPELEIGM…RTSRKSADIV (134 aa)) is cleaved from the precursor. One can recognise a CARD domain in the interval 64 to 109 (EKDVRVEQHRRLLLKITQRGPTAYNLLINALRNINCLDAAVLLESV). Residues 114-125 (SRPPFISLNERR) are required for binding Diap1. Active-site residues include His271 and Cys318. The propeptide occupies 321–324 (DEYD).

Belongs to the peptidase C14A family. In terms of assembly, interacts (via residues 114-125) with Diap1 (via BIR 2 domain); binding blocks Dronc-mediated cell death. Can form a stable complex with Drice. Rpr, hid and grim can out-compete Dronc for binding Diap1, therefore removing Diap1-mediated ubiquitination. Interacts (via CARD domain) with Dark (via Dark CARD and WD domains); the interaction stimulates Dark oligomerization to form the apoptosome and brings pairs of Dronc molecules together on the apoptosome to facilitate their dimerization and activation by autocatalytic cleavage. Binding to Dark stimulates apoptosome assembly. After autocatalytic cleavage the Dronc caspase domain dissociates from the apoptosome but the CARD domain remains associated. Ubiquitinated by Diap1, leading to its subsequent degradation. Ubiquitously expressed in embryos during early stages of development. In late third instar larvae, dramatic up-regulation in salivary glands and midgut before histolysis of these tissues.

The protein resides in the cytoplasm. The catalysed reaction is Strict requirement for an Asp residue at position P1 and with a marked preference for His at position P2. It has a preferred cleavage sequence of Leu-Gly-His-Asp-|-Xaa.. Zymogen activated by autocatalytic cleavage; association with the Dark apoptosome brings multiple molecules together to facilitate their dimerization and activation by autocatalytic cleavage. Involved in the activation cascade of caspases responsible for apoptosis execution. Effector of steroid-mediated apoptosis during insect metamorphosis. Overexpression promotes programmed cell death. Interaction with Diap1 is required to suppress Dronc-mediated cell death; via Diap1-mediated ubiquitination of Dronc. Rate-limiting caspase in rpr, grim and hid death pathway. Recruited to the Dark apoptosome, an adapter protein complex that mediates activation of the caspase cascade in programmed cell death initiated by the intrinsic apoptosis pathway. Association with the Dark apoptosome stimulates autocatalytic cleavage and activation of Dronc, promoting Dronc-mediated cleavage of downstream effector caspases such as Drice. This Drosophila melanogaster (Fruit fly) protein is Caspase Dronc.